The sequence spans 217 residues: Oxygen regulatory protein NreC (217 aa).

A Response regulatory domain is found at 2 to 119; it reads KIVIADDHAV…QLISAVRTVY (118 aa). Residue aspartate 53 is modified to 4-aspartylphosphate. An HTH luxR-type domain is found at 148–213; that stretch reads TNDPFRILSK…ELVEYALKKK (66 aa). The H-T-H motif DNA-binding region spans 172 to 191; it reads NKEIAEKLFVSVKTVEAHKT.

In terms of processing, phosphorylated by NreB.

It localises to the cytoplasm. Its function is as follows. Member of the two-component regulatory system NreB/NreC involved in the control of dissimilatory nitrate/nitrite reduction in response to oxygen. Phosphorylated NreC binds to a GC-rich palindromic sequence at the promoters of the nitrate (narGHJI) and nitrite (nir) reductase operons, as well as the putative nitrate transporter gene narT, and activates their expression. The protein is Oxygen regulatory protein NreC (nreC) of Staphylococcus carnosus (strain TM300).